The primary structure comprises 448 residues: Probable intron-encoded endonuclease bI1 (448 aa).

Positions 1-132 are cob exon 1 encoded; the sequence is MRLLKSHPLL…LMMATAFLGY (132 aa). Transmembrane regions (helical) follow at residues 32-52, 86-106, and 112-132; these read FGSLLACCLIIQIVTGVTLAM, ASAFFFLVYLHIGRGMYYGSY, and LVWAIGTVILILMMATAFLGY. Positions 133 to 448 are cob intron 1 encoded; sequence QHSPKWFDIS…QWIVEDFSDK (316 aa). The region spanning 230-321 is the GIY-YIG domain; it reads DLSGVYMIIN…LKLLVPNYNI (92 aa).

This sequence to endonucleases of group I introns of fungi and phage. Post-translationally, the mature protein may arise from proteolytic cleavage of an in-frame translation of cob exon 1 plus intron 1, containing the bI1 open reading frame.

Its subcellular location is the mitochondrion inner membrane. Its function is as follows. Mitochondrial DNA endonuclease involved in intron homing. The chain is Probable intron-encoded endonuclease bI1 (bI1) from Neurospora crassa (strain ATCC 24698 / 74-OR23-1A / CBS 708.71 / DSM 1257 / FGSC 987).